We begin with the raw amino-acid sequence, 466 residues long: UDP-N-acetylmuramoylalanine--D-glutamate ligase (466 aa).

Residue 121–127 (GTNGKST) coordinates ATP.

The protein belongs to the MurCDEF family.

The protein resides in the cytoplasm. It catalyses the reaction UDP-N-acetyl-alpha-D-muramoyl-L-alanine + D-glutamate + ATP = UDP-N-acetyl-alpha-D-muramoyl-L-alanyl-D-glutamate + ADP + phosphate + H(+). It participates in cell wall biogenesis; peptidoglycan biosynthesis. In terms of biological role, cell wall formation. Catalyzes the addition of glutamate to the nucleotide precursor UDP-N-acetylmuramoyl-L-alanine (UMA). The chain is UDP-N-acetylmuramoylalanine--D-glutamate ligase from Nitrobacter winogradskyi (strain ATCC 25391 / DSM 10237 / CIP 104748 / NCIMB 11846 / Nb-255).